The chain runs to 391 residues: MSLNPRDVVVVDCVRTPMGRAKNGCFRNVRAETLSAALIEALFERNPKLDPKEVEDVIWGCVNQTKEQGFNVARQISLLTRIPHESAAQTVNRLCGSAMSAIHTAAQAIQTGNGDVFLVGGVEHMGHVPMTEGFDHNPAASKYSAKASNMMGLTAEMLAKMHGITREQQDEFGARSHRLAHEATQEGRFKNEIVPIEGHDENGFVKLIEEDETIRPETTAESLGQLRPAFDPKNGTVTAGTSSQLTDGASAMVLMSAERAEALGLTPIAKIRSMAVAGCDPAIMGYGPVPATKKALKRAGLKVEDIDFWELNEAFAGQSLPVLKDLKLLGVMEEKVNLNGGAIALGHPLGCSGARISTTLLNIMQAKGGKLGVSTMCIGLGQGIATVWERI.

Residue Cys95 is the Acyl-thioester intermediate of the active site. Catalysis depends on proton acceptor residues His347 and Cys377.

Belongs to the thiolase-like superfamily. Thiolase family. In terms of assembly, heterotetramer of two alpha chains (FadB) and two beta chains (FadA).

It localises to the cytoplasm. The catalysed reaction is an acyl-CoA + acetyl-CoA = a 3-oxoacyl-CoA + CoA. The protein operates within lipid metabolism; fatty acid beta-oxidation. Its function is as follows. Catalyzes the final step of fatty acid oxidation in which acetyl-CoA is released and the CoA ester of a fatty acid two carbons shorter is formed. The chain is 3-ketoacyl-CoA thiolase from Marinobacter nauticus (strain ATCC 700491 / DSM 11845 / VT8) (Marinobacter aquaeolei).